We begin with the raw amino-acid sequence, 1839 residues long: Mannuronan C5-epimerase AlgE3 (1839 aa).

PbH1 repeat units follow at residues 133 to 155, 157 to 179, 180 to 202, 204 to 226, 257 to 279, 280 to 302, 320 to 342, and 347 to 369; these read DRDV…DPHE, TINL…VADY, QVGG…NIVT, TNDF…VVQR, THDV…RVYG, AQDV…YAEV, TTGT…GIQE, and TDYS…RLYG. The segment covering 372-386 has biased composition (polar residues); sequence STVSEQPSSGQQATL. Residues 372–392 are disordered; sequence STVSEQPSSGQQATLEGTAGN. Hemolysin-type calcium-binding repeat units lie at residues 387-399, 406-422, 424-440, 538-550, 557-573, 574-591, 695-709, 714-730, and 732-748; these read EGTA…SGTG, GLAG…DDTL, GGAG…ADTF, TGTE…SGTD, GYGG…NDIL, VGGA…ADVF, EGTD…TGAD, GLGG…DDVL, and GGAE…ADTF. 8 PbH1 repeats span residues 975–997, 999–1021, 1022–1044, 1046–1068, 1099–1121, 1122–1143, 1161–1183, and 1188–1210; these read DRNV…DPHE, TINL…VADY, LVDS…NVVT, TYDF…VIQR, TNNI…RLYG, TEDV…AYAE, TTGT…GIEE, and TDYS…RLNG. Residues 1215–1236 are compositionally biased toward polar residues; that stretch reads VSDQPGTGQQATLEGTTGNDTL. The tract at residues 1215 to 1238 is disordered; that stretch reads VSDQPGTGQQATLEGTTGNDTLGG. 10 Hemolysin-type calcium-binding repeats span residues 1229 to 1243, 1247 to 1263, 1265 to 1281, 1398 to 1414, 1415 to 1432, 1536 to 1552, 1554 to 1571, 1670 to 1681, 1688 to 1704, and 1706 to 1722; these read GTTG…DAHE, GLDG…NDIL, GGVG…ADTF, GHAG…DDIL, VGGA…ADVF, EGTA…ADEV, HGGS…ADVF, GGDGNDTLSGGS, GGAG…NDIL, and GGAG…SDIF.

This sequence belongs to the D-mannuronate C5-epimerase family. Ca(2+) is required as a cofactor.

Its subcellular location is the secreted. It carries out the reaction [(1-&gt;4)-beta-D-mannuronosyl](n) = [alginate](n). It participates in glycan biosynthesis; alginate biosynthesis. Its activity is regulated as follows. Inhibited by zinc. Functionally, converts beta-D-mannuronic acid (M) to alpha-L-guluronic acid (G), producing a polymer with gel-forming capacity, required for the formation of the cyst coat. The polypeptide is Mannuronan C5-epimerase AlgE3 (Azotobacter vinelandii).